The sequence spans 518 residues: E3 ubiquitin-protein ligase TRIM39 (518 aa).

The segment at 29–70 (CSVCLEYLKEPVIIECGHNFCKACITRWWEDLERDFPCPVCR) adopts an RING-type zinc-finger fold. The B box-type zinc-finger motif lies at 102-143 (RDESLCPQHHEALSLFCYEDQEAVCLICAISHTHRAHTVVPL). Positions 107, 110, 129, and 135 each coordinate Zn(2+). A coiled-coil region spans residues 181–250 (ELKRLVESRR…AHLAAEVEGK (70 aa)). Interaction with CDKN1A stretches follow at residues 268-337 (KNIP…QLIA) and 389-518 (TSGR…TDWE). The 196-residue stretch at 319–514 (SNFPRQYFAL…NAAPLTIRPP (196 aa)) folds into the B30.2/SPRY domain.

It belongs to the TRIM/RBCC family. Isoform 1 interacts with MOAP1. Isoform 1 and isoform 2 interact with CDKN1A. Isoform 2 interacts (via domain B box-type) with CACTIN. In terms of processing, autoubiquitinated. In terms of tissue distribution, ubiquitous; highly expressed in brain, heart, kidney, liver, skeletal muscle, spleen and testis.

It is found in the cytoplasm. It localises to the cytosol. The protein resides in the mitochondrion. The protein localises to the nucleus. It catalyses the reaction S-ubiquitinyl-[E2 ubiquitin-conjugating enzyme]-L-cysteine + [acceptor protein]-L-lysine = [E2 ubiquitin-conjugating enzyme]-L-cysteine + N(6)-ubiquitinyl-[acceptor protein]-L-lysine.. Its pathway is protein modification; protein ubiquitination. E3 ubiquitin-protein ligase. May facilitate apoptosis by inhibiting APC/C-Cdh1-mediated poly-ubiquitination and subsequent proteasome-mediated degradation of the pro-apoptotic protein MOAP1. Regulates the G1/S transition of the cell cycle and DNA damage-induced G2 arrest by stabilizing CDKN1A/p21. Positively regulates CDKN1A/p21 stability by competing with DTL for CDKN1A/p21 binding, therefore disrupting DCX(DTL) E3 ubiquitin ligase complex-mediated CDKN1A/p21 ubiquitination and degradation. Functionally, regulates the G1/S transition of the cell cycle and DNA damage-induced G2 arrest by stabilizing CDKN1A/p21. Positively regulates CDKN1A/p21 stability by competing with DTL for CDKN1A/p21 binding, therefore disrupting DCX(DTL) E3 ubiquitin ligase complex-mediated CDKN1A/p21 ubiquitination and degradation. Negatively regulates the canonical NF-kappa-B signaling pathway via stabilization of CACTIN in an ubiquitination-independent manner. In Homo sapiens (Human), this protein is E3 ubiquitin-protein ligase TRIM39 (TRIM39).